Reading from the N-terminus, the 78-residue chain is Polcalcin Phl p 7 (78 aa).

2 EF-hand domains span residues 1–35 (MADD…LGST) and 35–70 (TSAD…NPGL). The Ca(2+) site is built by D13, N15, D17, K19, E24, D48, D50, D52, and E59.

Monomer. Specifically expressed in pollen.

In terms of biological role, may be involved in the regulation of pollen-tube growth. This is Polcalcin Phl p 7 from Phleum pratense (Common timothy).